The sequence spans 476 residues: Glycogen synthase (476 aa).

Residue Lys-15 participates in ADP-alpha-D-glucose binding.

It belongs to the glycosyltransferase 1 family. Bacterial/plant glycogen synthase subfamily.

The catalysed reaction is [(1-&gt;4)-alpha-D-glucosyl](n) + ADP-alpha-D-glucose = [(1-&gt;4)-alpha-D-glucosyl](n+1) + ADP + H(+). The protein operates within glycan biosynthesis; glycogen biosynthesis. Synthesizes alpha-1,4-glucan chains using ADP-glucose. In Streptococcus agalactiae serotype Ia (strain ATCC 27591 / A909 / CDC SS700), this protein is Glycogen synthase.